The chain runs to 156 residues: 2-C-methyl-D-erythritol 2,4-cyclodiphosphate synthase (156 aa).

Residues D9 and H11 each contribute to the a divalent metal cation site. 4-CDP-2-C-methyl-D-erythritol 2-phosphate contacts are provided by residues 9-11 (DAH) and 35-36 (HS). H43 serves as a coordination point for a divalent metal cation. Residue 57–59 (DIG) participates in 4-CDP-2-C-methyl-D-erythritol 2-phosphate binding.

This sequence belongs to the IspF family. In terms of assembly, homotrimer. A divalent metal cation serves as cofactor.

It carries out the reaction 4-CDP-2-C-methyl-D-erythritol 2-phosphate = 2-C-methyl-D-erythritol 2,4-cyclic diphosphate + CMP. It participates in isoprenoid biosynthesis; isopentenyl diphosphate biosynthesis via DXP pathway; isopentenyl diphosphate from 1-deoxy-D-xylulose 5-phosphate: step 4/6. Functionally, involved in the biosynthesis of isopentenyl diphosphate (IPP) and dimethylallyl diphosphate (DMAPP), two major building blocks of isoprenoid compounds. Catalyzes the conversion of 4-diphosphocytidyl-2-C-methyl-D-erythritol 2-phosphate (CDP-ME2P) to 2-C-methyl-D-erythritol 2,4-cyclodiphosphate (ME-CPP) with a corresponding release of cytidine 5-monophosphate (CMP). In Hydrogenobaculum sp. (strain Y04AAS1), this protein is 2-C-methyl-D-erythritol 2,4-cyclodiphosphate synthase.